The chain runs to 1773 residues: Zinc finger CCCH domain-containing protein 19 (1773 aa).

The interval 145-166 (SGDRLEENKEVSMEEEPSSHEL) is disordered. Residues 147-156 (DRLEENKEVS) are compositionally biased toward basic and acidic residues. Residues 196 to 218 (GEEIESDLESKKEKVDVIEEETT) adopt a coiled-coil conformation. 3 disordered regions span residues 270–290 (IGEG…DVTE), 361–409 (DVDK…AGQT), and 434–591 (ISEM…KTVK). Basic and acidic residues-rich tracts occupy residues 273–286 (GAKD…KEGV) and 361–378 (DVDK…HVPE). Positions 403–437 (AEEAGQTVDLEEIREENQELSKELAQVDETKISEM) form a coiled coil. Basic and acidic residues-rich tracts occupy residues 444-455 (MIKDEDQEKDDN) and 497-513 (KVDR…TDTR). Composition is skewed to acidic residues over residues 514-529 (IEDE…TDVA) and 551-572 (EEMT…EVEE). Positions 578 to 588 (GGKRKRGRNTK) are enriched in basic residues. The short motif at 581–588 (RKRGRNTK) is the Nuclear localization signal 1 element. The PHD-type zinc-finger motif lies at 599 to 665 (EDVCFMCFDG…TYLCYTCMFS (67 aa)). The segment covering 741–751 (AKRPLKGHETN) has biased composition (basic and acidic residues). Residues 741 to 797 (AKRPLKGHETNASKQGTASETDYVTDGGSDSDSSPKKRKTRSRSKSGSAEKILSSGD) are disordered. The span at 752–762 (ASKQGTASETD) shows a compositional bias: polar residues. The region spanning 801–884 (SDETMEWASK…LNLLDSHFLK (84 aa)) is the SWIB/MDM2 domain. Positions 903–919 (PNHVDVDENLDHPVKSG) are enriched in basic and acidic residues. The interval 903–935 (PNHVDVDENLDHPVKSGKDKKRKTRKKNVRKGR) is disordered. Over residues 920 to 935 (KDKKRKTRKKNVRKGR) the composition is skewed to basic residues. The Nuclear localization signal 2 signature appears at 921-928 (DKKRKTRK). Positions 944-1076 (AVDMHNINLI…KAIALQEVRV (133 aa)) constitute a Plus3 domain. Residues 1139-1152 (EEIPEIHADPKMDP) are compositionally biased toward basic and acidic residues. The segment at 1139 to 1274 (EEIPEIHADP…PETPARSSRA (136 aa)) is disordered. Positions 1153-1163 (DCESEDEDEKE) are enriched in acidic residues. Over residues 1193-1212 (FSSNESWTGTSNYSNTSANR) the composition is skewed to polar residues. Phosphoserine is present on Ser-1281. The region spanning 1307–1361 (EKIWHYKDPSGKVQGPFSMAQLRKWNNTGYFPAKLEIWKANESPLDSVLLTDALA) is the GYF domain. Polar residues-rich tracts occupy residues 1409-1433 (RNSQ…TTPT), 1441-1469 (SRWS…QSQT), 1499-1509 (VSVNHSATLHS), and 1518-1528 (SWGSMQTDHGG). Disordered stretches follow at residues 1409 to 1469 (RNSQ…QSQT), 1485 to 1605 (QPQT…SWGQ), and 1649 to 1746 (GQTQ…QQNN). A compositionally biased stretch (low complexity) spans 1529–1555 (SNTPSSQNNSTSYGTPSPSVLPSQSQP). A compositionally biased stretch (polar residues) spans 1569-1579 (SQPNAQAQAQW). Low complexity-rich tracts occupy residues 1585–1602 (NNNQ…QNSS) and 1666–1677 (QSQSQSQVQAQA). A compositionally biased stretch (polar residues) spans 1678–1708 (GTTGSGWMQPGQGIQSGNSNQNWGTQNQTAI). Residues 1722–1735 (GNQQQSQNGDSGYG) show a composition bias toward low complexity. The span at 1737 to 1746 (NRQSGGQQNN) shows a compositional bias: polar residues. The segment at 1747 to 1773 (FKGQRVCKFFRENGHCRKGASCNYLHN) adopts a C3H1-type zinc-finger fold.

As to quaternary structure, interacts with unmethylated histone H3 and AGO2. The interaction with AGO2 in required to direct DNA methylation and silencing. As to expression, expressed in seedlings, mostly in the vasculature and shoot apices of young seedlings.

Its subcellular location is the nucleus. Plays a central role in integrating RNA silencing and chromatin signals in 21 nt siRNA-dependent DNA methylation on cytosine pathway leading to transcriptional gene silencing of specific sequences. Involved in a chromatin-based RNA silencing pathway that encompasses both post-transcriptional gene silencing (PTGS) (e.g. RDR1, RDR6 and AGO2) and transcriptional gene silencing (TGS) (e.g. siRNA-dependent DNA methylation and histone H3) components. Mediates siRNA accumulation at specific chromatin loci. Binds H3K4me0 through its PHD to enforce low levels of H3K4 methylation and gene silencing at a subset of genomic loci. The protein is Zinc finger CCCH domain-containing protein 19 (NERD) of Arabidopsis thaliana (Mouse-ear cress).